Here is a 201-residue protein sequence, read N- to C-terminus: MELVLKDAQSALEVSETTFGRDFNEALVHQVVVAYAANARQGTRAQKTRAEVVGSGKKPWRQKGTGRARAGTVKGPIWRGGGVTFAAKAQDHSQKVNKKMYRGALKSIFSELVRQDRLVVVESFGVEAPKTKELKAKLNEMQLEDVLIVTPEVDENLFLAARNLYKVDVRDVAGIDPVSLIAFNKVLVTAEAIKQIEEMLG.

A disordered region spans residues 46–71 (QKTRAEVVGSGKKPWRQKGTGRARAG).

It belongs to the universal ribosomal protein uL4 family. As to quaternary structure, part of the 50S ribosomal subunit.

One of the primary rRNA binding proteins, this protein initially binds near the 5'-end of the 23S rRNA. It is important during the early stages of 50S assembly. It makes multiple contacts with different domains of the 23S rRNA in the assembled 50S subunit and ribosome. Its function is as follows. Forms part of the polypeptide exit tunnel. This chain is Large ribosomal subunit protein uL4, found in Shewanella piezotolerans (strain WP3 / JCM 13877).